The following is a 266-amino-acid chain: 3-methyl-2-oxobutanoate hydroxymethyltransferase 2 (266 aa).

Mg(2+) contacts are provided by D45 and D84. Residues 45 to 46 (DS), D84, and K112 each bind 3-methyl-2-oxobutanoate. E114 provides a ligand contact to Mg(2+). The active-site Proton acceptor is the E181.

This sequence belongs to the PanB family. In terms of assembly, homodecamer; pentamer of dimers. Mg(2+) is required as a cofactor.

It localises to the cytoplasm. It catalyses the reaction 3-methyl-2-oxobutanoate + (6R)-5,10-methylene-5,6,7,8-tetrahydrofolate + H2O = 2-dehydropantoate + (6S)-5,6,7,8-tetrahydrofolate. It participates in cofactor biosynthesis; (R)-pantothenate biosynthesis; (R)-pantoate from 3-methyl-2-oxobutanoate: step 1/2. Functionally, catalyzes the reversible reaction in which hydroxymethyl group from 5,10-methylenetetrahydrofolate is transferred onto alpha-ketoisovalerate to form ketopantoate. This is 3-methyl-2-oxobutanoate hydroxymethyltransferase 2 from Pseudomonas aeruginosa (strain ATCC 15692 / DSM 22644 / CIP 104116 / JCM 14847 / LMG 12228 / 1C / PRS 101 / PAO1).